The primary structure comprises 400 residues: Argininosuccinate synthase (400 aa).

8–16 (AYSGGLDTS) serves as a coordination point for ATP. L-citrulline-binding residues include Tyr87 and Ser92. Gly117 contributes to the ATP binding site. 3 residues coordinate L-aspartate: Thr119, Asn123, and Asp124. Asn123 provides a ligand contact to L-citrulline. Arg127, Ser175, Glu259, and Tyr271 together coordinate L-citrulline.

This sequence belongs to the argininosuccinate synthase family. Type 1 subfamily. In terms of assembly, homotetramer.

The protein localises to the cytoplasm. It catalyses the reaction L-citrulline + L-aspartate + ATP = 2-(N(omega)-L-arginino)succinate + AMP + diphosphate + H(+). It functions in the pathway amino-acid biosynthesis; L-arginine biosynthesis; L-arginine from L-ornithine and carbamoyl phosphate: step 2/3. The polypeptide is Argininosuccinate synthase (Frankia casuarinae (strain DSM 45818 / CECT 9043 / HFP020203 / CcI3)).